A 64-amino-acid chain; its full sequence is Large ribosomal subunit protein bL35 (64 aa).

This sequence belongs to the bacterial ribosomal protein bL35 family.

This Coxiella burnetii (strain RSA 331 / Henzerling II) protein is Large ribosomal subunit protein bL35.